The primary structure comprises 561 residues: Dihydroxy-acid dehydratase (561 aa).

C50 provides a ligand contact to [2Fe-2S] cluster. D82 provides a ligand contact to Mg(2+). [2Fe-2S] cluster is bound at residue C123. Mg(2+) is bound by residues D124 and K125. At K125 the chain carries N6-carboxylysine. C195 contacts [2Fe-2S] cluster. E447 serves as a coordination point for Mg(2+). S473 (proton acceptor) is an active-site residue.

It belongs to the IlvD/Edd family. Homodimer. [2Fe-2S] cluster is required as a cofactor. The cofactor is Mg(2+).

It catalyses the reaction (2R)-2,3-dihydroxy-3-methylbutanoate = 3-methyl-2-oxobutanoate + H2O. It carries out the reaction (2R,3R)-2,3-dihydroxy-3-methylpentanoate = (S)-3-methyl-2-oxopentanoate + H2O. The protein operates within amino-acid biosynthesis; L-isoleucine biosynthesis; L-isoleucine from 2-oxobutanoate: step 3/4. It functions in the pathway amino-acid biosynthesis; L-valine biosynthesis; L-valine from pyruvate: step 3/4. Its function is as follows. Functions in the biosynthesis of branched-chain amino acids. Catalyzes the dehydration of (2R,3R)-2,3-dihydroxy-3-methylpentanoate (2,3-dihydroxy-3-methylvalerate) into 2-oxo-3-methylpentanoate (2-oxo-3-methylvalerate) and of (2R)-2,3-dihydroxy-3-methylbutanoate (2,3-dihydroxyisovalerate) into 2-oxo-3-methylbutanoate (2-oxoisovalerate), the penultimate precursor to L-isoleucine and L-valine, respectively. The polypeptide is Dihydroxy-acid dehydratase (Trichodesmium erythraeum (strain IMS101)).